The primary structure comprises 288 residues: Coiled-coil domain-containing protein 190 (288 aa).

The stretch at 16–69 (LERKSARQAEARLSLRLQRLEIICLYHVKSLAREQRQLQKELQRLQQDIIKKRF) forms a coiled coil. The interval 141–235 (GERTSCFKEG…SSVDYAGSFK (95 aa)) is disordered. Residues 177 to 188 (HDQELSTNKTED) are compositionally biased toward basic and acidic residues. Polar residues predominate over residues 203-213 (ANETRSENASQ).

This is Coiled-coil domain-containing protein 190 (Ccdc190) from Mus musculus (Mouse).